A 255-amino-acid chain; its full sequence is Tryptophan synthase alpha chain (255 aa).

Catalysis depends on proton acceptor residues E42 and D53.

Belongs to the TrpA family. In terms of assembly, tetramer of two alpha and two beta chains.

It carries out the reaction (1S,2R)-1-C-(indol-3-yl)glycerol 3-phosphate + L-serine = D-glyceraldehyde 3-phosphate + L-tryptophan + H2O. It functions in the pathway amino-acid biosynthesis; L-tryptophan biosynthesis; L-tryptophan from chorismate: step 5/5. Functionally, the alpha subunit is responsible for the aldol cleavage of indoleglycerol phosphate to indole and glyceraldehyde 3-phosphate. The polypeptide is Tryptophan synthase alpha chain (Wolinella succinogenes (strain ATCC 29543 / DSM 1740 / CCUG 13145 / JCM 31913 / LMG 7466 / NCTC 11488 / FDC 602W) (Vibrio succinogenes)).